The following is a 233-amino-acid chain: Probable 2-phosphosulfolactate phosphatase (233 aa).

The protein belongs to the ComB family. Requires Mg(2+) as cofactor.

It carries out the reaction (2R)-O-phospho-3-sulfolactate + H2O = (2R)-3-sulfolactate + phosphate. The chain is Probable 2-phosphosulfolactate phosphatase from Clostridium tetani (strain Massachusetts / E88).